The primary structure comprises 210 residues: Probable high-affinity nitrate transporter-activating protein 2.2 (210 aa).

Residues 1–23 (MARFGAVIHRVFLPLLLLLVVLG) form the signal peptide. A helical membrane pass occupies residues 182 to 202 (IEVAAGVLSAFSVAALAVFLV).

Belongs to the NAR2 family.

The protein localises to the cell membrane. Involved in nitrate transport. The sequence is that of Probable high-affinity nitrate transporter-activating protein 2.2 (NAR2.2) from Oryza sativa subsp. japonica (Rice).